Reading from the N-terminus, the 286-residue chain is Pyridoxal kinase PdxY (286 aa).

Substrate contacts are provided by residues Ser-9 and 44-45; that span reads MQ. Asp-111, Glu-147, and Lys-180 together coordinate ATP. Asp-221 is a binding site for substrate.

It belongs to the pyridoxine kinase family. PdxY subfamily. As to quaternary structure, homodimer. Mg(2+) is required as a cofactor.

The catalysed reaction is pyridoxal + ATP = pyridoxal 5'-phosphate + ADP + H(+). Its pathway is cofactor metabolism; pyridoxal 5'-phosphate salvage; pyridoxal 5'-phosphate from pyridoxal: step 1/1. Functionally, pyridoxal kinase involved in the salvage pathway of pyridoxal 5'-phosphate (PLP). Catalyzes the phosphorylation of pyridoxal to PLP. The chain is Pyridoxal kinase PdxY from Burkholderia lata (strain ATCC 17760 / DSM 23089 / LMG 22485 / NCIMB 9086 / R18194 / 383).